The chain runs to 120 residues: Ribosome-binding factor A (120 aa).

Belongs to the RbfA family. As to quaternary structure, monomer. Binds 30S ribosomal subunits, but not 50S ribosomal subunits or 70S ribosomes.

The protein localises to the cytoplasm. Functionally, one of several proteins that assist in the late maturation steps of the functional core of the 30S ribosomal subunit. Associates with free 30S ribosomal subunits (but not with 30S subunits that are part of 70S ribosomes or polysomes). Required for efficient processing of 16S rRNA. May interact with the 5'-terminal helix region of 16S rRNA. This is Ribosome-binding factor A from Chlamydia pneumoniae (Chlamydophila pneumoniae).